Consider the following 345-residue polypeptide: Ketol-acid reductoisomerase (NADP(+)) (345 aa).

A KARI N-terminal Rossmann domain is found at 2–182 (AKVYHDSSAD…GTTRAGVLET (181 aa)). Residues 25 to 28 (YGSQ), arginine 48, serine 51, serine 53, and 83 to 86 (DTEQ) each bind NADP(+). The active site involves histidine 108. Glycine 134 contributes to the NADP(+) binding site. The region spanning 183–328 (TFKEETETDL…AQLRDMMTFL (146 aa)) is the KARI C-terminal knotted domain. Mg(2+) contacts are provided by aspartate 191, glutamate 195, glutamate 227, and glutamate 231. Residue serine 252 participates in substrate binding.

Belongs to the ketol-acid reductoisomerase family. The cofactor is Mg(2+).

The catalysed reaction is (2R)-2,3-dihydroxy-3-methylbutanoate + NADP(+) = (2S)-2-acetolactate + NADPH + H(+). It catalyses the reaction (2R,3R)-2,3-dihydroxy-3-methylpentanoate + NADP(+) = (S)-2-ethyl-2-hydroxy-3-oxobutanoate + NADPH + H(+). It functions in the pathway amino-acid biosynthesis; L-isoleucine biosynthesis; L-isoleucine from 2-oxobutanoate: step 2/4. Its pathway is amino-acid biosynthesis; L-valine biosynthesis; L-valine from pyruvate: step 2/4. Its function is as follows. Involved in the biosynthesis of branched-chain amino acids (BCAA). Catalyzes an alkyl-migration followed by a ketol-acid reduction of (S)-2-acetolactate (S2AL) to yield (R)-2,3-dihydroxy-isovalerate. In the isomerase reaction, S2AL is rearranged via a Mg-dependent methyl migration to produce 3-hydroxy-3-methyl-2-ketobutyrate (HMKB). In the reductase reaction, this 2-ketoacid undergoes a metal-dependent reduction by NADPH to yield (R)-2,3-dihydroxy-isovalerate. This Koribacter versatilis (strain Ellin345) protein is Ketol-acid reductoisomerase (NADP(+)).